The sequence spans 230 residues: Large ribosomal subunit protein uL1 (230 aa).

This sequence belongs to the universal ribosomal protein uL1 family. In terms of assembly, part of the 50S ribosomal subunit.

Functionally, binds directly to 23S rRNA. The L1 stalk is quite mobile in the ribosome, and is involved in E site tRNA release. In terms of biological role, protein L1 is also a translational repressor protein, it controls the translation of the L11 operon by binding to its mRNA. In Oenococcus oeni (strain ATCC BAA-331 / PSU-1), this protein is Large ribosomal subunit protein uL1.